A 205-amino-acid polypeptide reads, in one-letter code: Adenylyl-sulfate kinase (205 aa).

Residue 31–38 (GLSGAGKS) participates in ATP binding. S105 (phosphoserine intermediate) is an active-site residue.

The protein belongs to the APS kinase family.

The catalysed reaction is adenosine 5'-phosphosulfate + ATP = 3'-phosphoadenylyl sulfate + ADP + H(+). It functions in the pathway sulfur metabolism; hydrogen sulfide biosynthesis; sulfite from sulfate: step 2/3. Its function is as follows. Catalyzes the synthesis of activated sulfate. In Shewanella baltica (strain OS223), this protein is Adenylyl-sulfate kinase.